The following is a 211-amino-acid chain: Uracil phosphoribosyltransferase (211 aa).

Residues R79, R104, and 131–139 (DPMLATGGS) each bind 5-phospho-alpha-D-ribose 1-diphosphate. Uracil is bound by residues I196 and 201–203 (GDA). Position 202 (D202) interacts with 5-phospho-alpha-D-ribose 1-diphosphate.

The protein belongs to the UPRTase family. Mg(2+) serves as cofactor.

The catalysed reaction is UMP + diphosphate = 5-phospho-alpha-D-ribose 1-diphosphate + uracil. Its pathway is pyrimidine metabolism; UMP biosynthesis via salvage pathway; UMP from uracil: step 1/1. Its activity is regulated as follows. Allosterically activated by GTP. In terms of biological role, catalyzes the conversion of uracil and 5-phospho-alpha-D-ribose 1-diphosphate (PRPP) to UMP and diphosphate. The chain is Uracil phosphoribosyltransferase from Limosilactobacillus reuteri (strain DSM 20016) (Lactobacillus reuteri).